Reading from the N-terminus, the 605-residue chain is FAD-linked oxidoreductase easE (605 aa).

The N-terminal stretch at 1–20 (MRHFVTFVVGFLLSWGFLSS) is a signal peptide. Asn-46 and Asn-105 each carry an N-linked (GlcNAc...) asparagine glycan. The FAD-binding PCMH-type domain maps to 122–307 (CHQGRLPLYS…TQATVRAFPD (186 aa)). N-linked (GlcNAc...) asparagine glycosylation is present at Asn-370.

This sequence belongs to the oxygen-dependent FAD-linked oxidoreductase family. FAD serves as cofactor.

It participates in alkaloid biosynthesis; ergot alkaloid biosynthesis. Its function is as follows. FAD-linked oxidoreductase; part of the gene cluster that mediates the biosynthesis of fungal ergot alkaloid ergovaline, the predominant ergopeptine product in E.festucae var. lolii. DmaW catalyzes the first step of ergot alkaloid biosynthesis by condensing dimethylallyl diphosphate (DMAP) and tryptophan to form 4-dimethylallyl-L-tryptophan. The second step is catalyzed by the methyltransferase easF that methylates 4-dimethylallyl-L-tryptophan in the presence of S-adenosyl-L-methionine, resulting in the formation of 4-dimethylallyl-L-abrine. The catalase easC and the FAD-dependent oxidoreductase easE then transform 4-dimethylallyl-L-abrine to chanoclavine-I which is further oxidized by easD in the presence of NAD(+), resulting in the formation of chanoclavine-I aldehyde. Agroclavine dehydrogenase easG then mediates the conversion of chanoclavine-I aldehyde to agroclavine via a non-enzymatic adduct reaction: the substrate is an iminium intermediate that is formed spontaneously from chanoclavine-I aldehyde in the presence of glutathione. The presence of easA is not required to complete this reaction. Further conversion of agroclavine to paspalic acid is a two-step process involving oxidation of agroclavine to elymoclavine and of elymoclavine to paspalic acid, the second step being performed by the elymoclavine oxidase cloA. Paspalic acid is then further converted to D-lysergic acid. Ergovaline is assembled from D-lysergic acid and three different amino acids by the D-lysergyl-peptide-synthetase composed of a monomudular (lpsB) and a trimodular (lpsA) nonribosomal peptide synthetase subunit. The polypeptide is FAD-linked oxidoreductase easE (Epichloe festucae var. lolii (Neotyphodium lolii)).